The following is a 432-amino-acid chain: Ubiquitin-like modifier-activating enzyme 5 (432 aa).

A disordered region spans residues Glu-25–Ala-47. Residues Asn-29–Arg-44 show a composition bias toward polar residues. The ATP site is built by Gly-96, Asp-117, Lys-140, Asn-163, and Asn-196. Zn(2+) is bound by residues Cys-238 and Cys-241. Cys-262 functions as the Glycyl thioester intermediate in the catalytic mechanism. Cys-315 and Cys-320 together coordinate Zn(2+). A disordered region spans residues Asp-363 to Val-406. Positions Pro-386–Val-406 are enriched in polar residues.

The protein belongs to the ubiquitin-activating E1 family. UBA5 subfamily. In terms of assembly, interacts with ufc-1.

E1-like enzyme which activates ufm-1. Required for interaction between ufm-1 and ufc-1. This is Ubiquitin-like modifier-activating enzyme 5 from Caenorhabditis briggsae.